A 214-amino-acid chain; its full sequence is Ribonuclease HII (214 aa).

One can recognise an RNase H type-2 domain in the interval 27 to 214 (SVVAGIDEAG…SPIKQMCAIV (188 aa)). 3 residues coordinate a divalent metal cation: Asp-33, Glu-34, and Asp-126.

This sequence belongs to the RNase HII family. Mn(2+) is required as a cofactor. Requires Mg(2+) as cofactor.

It is found in the cytoplasm. It carries out the reaction Endonucleolytic cleavage to 5'-phosphomonoester.. In terms of biological role, endonuclease that specifically degrades the RNA of RNA-DNA hybrids. This Chlamydia pneumoniae (Chlamydophila pneumoniae) protein is Ribonuclease HII (rnhB).